The sequence spans 252 residues: Chitooligosaccharide deacetylase (252 aa).

Residues H61 and H125 each coordinate Mg(2+).

This sequence belongs to the YdjC deacetylase family. ChbG subfamily. As to quaternary structure, homodimer. Mg(2+) is required as a cofactor.

Its subcellular location is the cytoplasm. The catalysed reaction is N,N'-diacetylchitobiose + H2O = N-acetyl-beta-D-glucosaminyl-(1-&gt;4)-D-glucosamine + acetate. It catalyses the reaction diacetylchitobiose-6'-phosphate + H2O = N'-monoacetylchitobiose-6'-phosphate + acetate. The protein operates within glycan degradation; chitin degradation. Its function is as follows. Involved in the degradation of chitin. ChbG is essential for growth on the acetylated chitooligosaccharides chitobiose and chitotriose but is dispensable for growth on cellobiose and chitosan dimer, the deacetylated form of chitobiose. Deacetylation of chitobiose-6-P and chitotriose-6-P is necessary for both the activation of the chb promoter by the regulatory protein ChbR and the hydrolysis of phosphorylated beta-glucosides by the phospho-beta-glucosidase ChbF. Catalyzes the removal of only one acetyl group from chitobiose-6-P to yield monoacetylchitobiose-6-P, the inducer of ChbR and the substrate of ChbF. This Escherichia coli O45:K1 (strain S88 / ExPEC) protein is Chitooligosaccharide deacetylase.